The sequence spans 253 residues: Phosphate import ATP-binding protein PstB 1 (253 aa).

An ABC transporter domain is found at leucine 7–isoleucine 248. Glycine 39–serine 46 contacts ATP.

It belongs to the ABC transporter superfamily. Phosphate importer (TC 3.A.1.7) family. In terms of assembly, the complex is composed of two ATP-binding proteins (PstB), two transmembrane proteins (PstC and PstA) and a solute-binding protein (PstS).

The protein resides in the cell membrane. The catalysed reaction is phosphate(out) + ATP + H2O = ADP + 2 phosphate(in) + H(+). Its function is as follows. Part of the ABC transporter complex PstSACB involved in phosphate import. Responsible for energy coupling to the transport system. This is Phosphate import ATP-binding protein PstB 1 from Streptococcus pyogenes serotype M12 (strain MGAS9429).